The primary structure comprises 355 residues: UPF0421 protein BCE33L2478 (355 aa).

Helical transmembrane passes span 19-39 (IAVF…IFAV), 74-94 (FTFF…FTIV), 109-129 (TLTA…AFLI), and 131-151 (LATT…ILPP).

Belongs to the UPF0421 family.

It localises to the cell membrane. This Bacillus cereus (strain ZK / E33L) protein is UPF0421 protein BCE33L2478.